Here is a 128-residue protein sequence, read N- to C-terminus: Small ribosomal subunit protein uS9 (128 aa).

It belongs to the universal ribosomal protein uS9 family. In terms of assembly, part of the 30S ribosomal subunit. Contacts proteins S7 and S10.

Functionally, part of the top of the head of the 30S subunit. The C-terminal region penetrates the head emerging in the P-site where it contacts tRNA. This chain is Small ribosomal subunit protein uS9 (rpsI), found in Thermus thermophilus (strain ATCC BAA-163 / DSM 7039 / HB27).